A 68-amino-acid polypeptide reads, in one-letter code: Frenatin-3 (68 aa).

Positions 1 to 22 are cleaved as a signal peptide; that stretch reads MHFLKKSIFLVLFLGLVSLSIC. The propeptide occupies 23-46; sequence EKEKREDQNEEEVDENEEESEEKR. Residues 26–47 are disordered; it reads KREDQNEEEVDENEEESEEKRG. A compositionally biased stretch (acidic residues) spans 30-42; the sequence is QNEEEVDENEEES.

The protein belongs to the frog skin active peptide (FSAP) family. Frenatin subfamily. As to expression, expressed by the granular skin glands.

It localises to the secreted. Its function is as follows. Antimicrobial peptide with activity against both Gram-positive and Gram-negative bacteria. Antibacterial activities have been tested against Bacillus cereus (MIC=12.5 ug/ml), Escherichia coli (MIC=50 ug/ml), Leuconostoc mesenteroides (MIC=25 ug/ml), Micrococcus luteus (MIC=1.5 ug/ml), Pastewella haemolytica (MIC=0.8 ug/ml), Staphylococcus aureus (MIC&lt;l00 ug/ml), Streptococcus faecalis (MIC&lt;150 ug/ml) and Streptococcus uberis (MIC=50 ug/ml). Strongly inhibits the formation of NO by neuronal nitric oxide synthase (nNOS) at micromolar concentrations. Acts by a non-competitive mechanism, probably by binding to calcium/calmodulin and as a consequence blocking calmodulin attachment to nNOS. The chain is Frenatin-3 from Nyctimystes infrafrenatus (White-lipped tree frog).